A 274-amino-acid chain; its full sequence is uncharacterized protein (274 aa).

The segment at 253–274 (QTGDVRTTEGTALTDDTTKRNI) is disordered.

This is an uncharacterized protein from Deinococcus radiodurans (strain ATCC 13939 / DSM 20539 / JCM 16871 / CCUG 27074 / LMG 4051 / NBRC 15346 / NCIMB 9279 / VKM B-1422 / R1).